The primary structure comprises 228 residues: Octanoyltransferase (228 aa).

Positions 32–214 (DVVPDTVLLV…HLRRLFERDW (183 aa)) constitute a BPL/LPL catalytic domain. Residues 77–84 (RGGDVTYH), 144–146 (SVG), and 157–159 (GIA) each bind substrate. Cysteine 175 functions as the Acyl-thioester intermediate in the catalytic mechanism.

This sequence belongs to the LipB family.

The protein localises to the cytoplasm. It catalyses the reaction octanoyl-[ACP] + L-lysyl-[protein] = N(6)-octanoyl-L-lysyl-[protein] + holo-[ACP] + H(+). Its pathway is protein modification; protein lipoylation via endogenous pathway; protein N(6)-(lipoyl)lysine from octanoyl-[acyl-carrier-protein]: step 1/2. Its function is as follows. Catalyzes the transfer of endogenously produced octanoic acid from octanoyl-acyl-carrier-protein onto the lipoyl domains of lipoate-dependent enzymes. Lipoyl-ACP can also act as a substrate although octanoyl-ACP is likely to be the physiological substrate. In Syntrophobacter fumaroxidans (strain DSM 10017 / MPOB), this protein is Octanoyltransferase.